We begin with the raw amino-acid sequence, 1330 residues long: G2/mitotic-specific cyclin-B3 (1330 aa).

Residues 1–50 (MPLPLPSRSSKPETKKSRSSKIVPSGNNGQSEKRGENYQEKISSSSPRRL) form a disordered region. A compositionally biased stretch (polar residues) spans 20-30 (SKIVPSGNNGQ). The D-box motif lies at 54 to 62 (RSAFEDLTN). The interval 1002-1059 (VETSSRVPSTPPESRAGMSSVGKLSTTSKSSVCESSSNKPSSSWGESSQKEMTPLEDI) is disordered. Over residues 1026 to 1048 (STTSKSSVCESSSNKPSSSWGES) the composition is skewed to low complexity.

It belongs to the cyclin family. Cyclin AB subfamily. Interacts with CDK2 kinase. Post-translationally, ubiquitinated. Ubiquitination leads to its degradation during anaphase entry, after degradation of CCNB1.

It is found in the nucleus. Its function is as follows. Cyclins are positive regulatory subunits of the cyclin-dependent kinases (CDKs), and thereby play an essential role in the control of the cell cycle, notably via their destruction during cell division. Its tissue specificity suggest that it may be required during early meiotic prophase I. The polypeptide is G2/mitotic-specific cyclin-B3 (CCNB3) (Canis lupus familiaris (Dog)).